The following is a 555-amino-acid chain: E3 ubiquitin-protein ligase ARIH1 (555 aa).

Residues 1–47 (MDSDEGYNYEFDEDEECSEEDSGAEEEEDDDEDEPDDDNLDLGEVEL) are compositionally biased toward acidic residues. Residues 1 to 93 (MDSDEGYNYE…GGGGGPGHEQ (93 aa)) form a disordered region. The span at 65-90 (ETGGGGGSALGPGGGGGGGGGGGGPG) shows a compositional bias: gly residues. The UBA-like stretch occupies residues 103 to 151 (TAEQILQHMVECIREVNEVIQNPATITRILLSHFNWDKEKLMERYFDGN). Lys140 is modified (N6-acetyllysine). The segment at 180–391 (QDMPCQICYL…SAWYNCNRYN (212 aa)) is TRIAD supradomain. The Zn(2+) site is built by Cys184, Cys187, Cys201, His203, Cys206, Cys209, Cys229, Cys234, Cys274, Cys279, Cys295, Cys297, Cys302, Cys305, His310, Cys315, Cys342, and Cys345. Residues 184–234 (CQICYLNYPNSYFTGLECGHKFCMQCWSEYLTTKIMEEGMGQTISCPAHGC) form an RING-type 1 zinc finger. Residues 254–315 (LKYQHLITNS…GENWHDPVKC (62 aa)) form an IBR-type zinc finger. An RING-type 2; atypical zinc finger spans residues 342–373 (CPKCHVTIEKDGGCNHMVCRNQNCKAEFCWVC). Residue Cys355 is part of the active site. Cys360, Cys365, Cys370, Cys373, His380, and Cys387 together coordinate Zn(2+). Residues 406–555 (RAALQRYLFY…EKDLWEYIED (150 aa)) form an ariadne domain region.

It belongs to the RBR family. Ariadne subfamily. Interacts (via the first RING-type zinc finger) with UBE2L3. Associates with cullin-RING ubiquitin ligase (CRL) complexes containing CUL1, CUL2 and CUL3. Interacts with neddylated CUL1. Interacts with neddylated CUL2. Interacts with neddylated CUL3. Interacts with neddylated CUL4A. In terms of tissue distribution, widely expressed.

It localises to the cytoplasm. Its subcellular location is the nucleus. The protein resides in the cajal body. The catalysed reaction is [E2 ubiquitin-conjugating enzyme]-S-ubiquitinyl-L-cysteine + [acceptor protein]-L-lysine = [E2 ubiquitin-conjugating enzyme]-L-cysteine + [acceptor protein]-N(6)-ubiquitinyl-L-lysine.. Its pathway is protein modification; protein ubiquitination. Autoinhibited by the ariadne domain, which masks the second RING-type zinc finger that contains the active site and inhibits the E3 activity. Inhibition is relieved upon binding to neddylated cullin-RING ubiquitin ligase complexes, which activate the E3 ligase activity of ARIH1. E3 ubiquitin-protein ligase, which catalyzes ubiquitination of target proteins together with ubiquitin-conjugating enzyme E2 UBE2L3. Acts as an atypical E3 ubiquitin-protein ligase by working together with cullin-RING ubiquitin ligase (CRL) complexes and initiating ubiquitination of CRL substrates: associates with CRL complexes and specifically mediates addition of the first ubiquitin on CRLs targets. The initial ubiquitin is then elongated by CDC34/UBE2R1 and UBE2R2. E3 ubiquitin-protein ligase activity is activated upon binding to neddylated cullin-RING ubiquitin ligase complexes. Plays a role in protein translation in response to DNA damage by mediating ubiquitination of EIF4E2, the consequences of EIF4E2 ubiquitination are however unclear. According to a report, EIF4E2 ubiquitination leads to promote EIF4E2 cap-binding and protein translation arrest. According to another report EIF4E2 ubiquitination leads to its subsequent degradation. Acts as the ligase involved in ISGylation of EIF4E2. In vitro, controls the degradation of the LINC (LInker of Nucleoskeleton and Cytoskeleton) complex member SUN2 and may therefore have a role in the formation and localization of the LINC complex, and as a consequence, may act in nuclear subcellular localization and nuclear morphology. The sequence is that of E3 ubiquitin-protein ligase ARIH1 (Arih1) from Mus musculus (Mouse).